A 205-amino-acid polypeptide reads, in one-letter code: Guanylate kinase (205 aa).

Residues 7–185 (GNIFIISAAS…AEEDLRHIVN (179 aa)) enclose the Guanylate kinase-like domain. 14–21 (AASGTGKT) contributes to the ATP binding site.

Belongs to the guanylate kinase family.

The protein resides in the cytoplasm. The catalysed reaction is GMP + ATP = GDP + ADP. In terms of biological role, essential for recycling GMP and indirectly, cGMP. This chain is Guanylate kinase (gmk), found in Neisseria meningitidis serogroup A / serotype 4A (strain DSM 15465 / Z2491).